The chain runs to 257 residues: Adenosylcobinamide-GDP ribazoletransferase (257 aa).

The next 7 membrane-spanning stretches (helical) occupy residues 30–50 (IVYF…IGWI), 52–72 (MLLF…VLIT), 109–129 (SLLA…DIIS), 132–152 (SLWV…LLTY), 175–195 (LITA…FIFL), 198–218 (NIVL…IILF), and 237–257 (GIEL…FMFF).

The protein belongs to the CobS family. It depends on Mg(2+) as a cofactor.

It is found in the cell membrane. The enzyme catalyses alpha-ribazole + adenosylcob(III)inamide-GDP = adenosylcob(III)alamin + GMP + H(+). The catalysed reaction is alpha-ribazole 5'-phosphate + adenosylcob(III)inamide-GDP = adenosylcob(III)alamin 5'-phosphate + GMP + H(+). Its pathway is cofactor biosynthesis; adenosylcobalamin biosynthesis; adenosylcobalamin from cob(II)yrinate a,c-diamide: step 7/7. In terms of biological role, joins adenosylcobinamide-GDP and alpha-ribazole to generate adenosylcobalamin (Ado-cobalamin). Also synthesizes adenosylcobalamin 5'-phosphate from adenosylcobinamide-GDP and alpha-ribazole 5'-phosphate. The polypeptide is Adenosylcobinamide-GDP ribazoletransferase (Clostridioides difficile (strain 630) (Peptoclostridium difficile)).